Here is a 307-residue protein sequence, read N- to C-terminus: MNKVIAIVGPTAVGKTALSIKLAHEFDGEVISGDSMQVYRRLDIGTAKVTPEEMGDVPHHLIDICNIEERFSAARFKKLADQKIDEIAQRNHLPIIAGGTGFYLQTLTDNLALGSDQFDQQTLDIRNHWKEVAEEKGAEYVWEQLNKLDPVASARIPKSNTRRVIRALEVIKKTGQLFSNQPHFKATNDFLLIGLTTDRPVLYDRINKRVDLMIQNGLLEEAKWLFDQGGEDLPAGKGIGYHELFPYFRGEISLDEAVEKIKQDSRHYAKRQLTWFRNKADTHWFDILRHPDDINQIKQFINDWLKK.

Glycine 9–threonine 16 contributes to the ATP binding site. Threonine 11–threonine 16 lines the substrate pocket. Positions aspartate 34 to glutamine 37 are interaction with substrate tRNA.

This sequence belongs to the IPP transferase family. Monomer. Requires Mg(2+) as cofactor.

The catalysed reaction is adenosine(37) in tRNA + dimethylallyl diphosphate = N(6)-dimethylallyladenosine(37) in tRNA + diphosphate. Catalyzes the transfer of a dimethylallyl group onto the adenine at position 37 in tRNAs that read codons beginning with uridine, leading to the formation of N6-(dimethylallyl)adenosine (i(6)A). This Limosilactobacillus reuteri (strain DSM 20016) (Lactobacillus reuteri) protein is tRNA dimethylallyltransferase.